The following is a 115-amino-acid chain: Replication initiation control protein YabA (115 aa).

Zn(2+) is bound by residues His-85, Cys-87, Cys-101, and Cys-104.

The protein belongs to the YabA family. Homotetramer. Interacts with both DnaA and DnaN, acting as a bridge between these two proteins. Requires Zn(2+) as cofactor.

It is found in the cytoplasm. It localises to the nucleoid. In terms of biological role, involved in control of chromosome replication initiation. Inhibits the cooperative binding of DnaA to the oriC region, thus negatively regulating initiation of chromosome replication. Inhibits the ability of DnaA-ATP to form a helix on DNA; does not disassemble preformed DnaA-DNA helices. Decreases the residence time of DnaA on the chromosome at its binding sites (oriC, replication forks and promoter-binding sites). Tethers DnaA to the replication machinery via the DNA polymerase beta sliding clamp subunit (dnaN). Associates with oriC and other DnaA targets on the chromosome in a DnaA-dependent manner. This is Replication initiation control protein YabA from Lactiplantibacillus plantarum (strain ATCC BAA-793 / NCIMB 8826 / WCFS1) (Lactobacillus plantarum).